We begin with the raw amino-acid sequence, 585 residues long: Arginine--tRNA ligase (585 aa).

The short motif at 126 to 136 (PNIAKEMHVGH) is the 'HIGH' region element.

This sequence belongs to the class-I aminoacyl-tRNA synthetase family. As to quaternary structure, monomer.

It localises to the cytoplasm. The catalysed reaction is tRNA(Arg) + L-arginine + ATP = L-arginyl-tRNA(Arg) + AMP + diphosphate. This Cyanothece sp. (strain PCC 7425 / ATCC 29141) protein is Arginine--tRNA ligase.